A 590-amino-acid polypeptide reads, in one-letter code: Myo-inositol transporter 3C (590 aa).

At 1 to 63 (MSRTPSSLDK…GEDKVTPYLC (63 aa)) the chain is on the cytoplasmic side. Residues 64–86 (FLISASAIAGFLFGYDTGVVGVA) form a helical membrane-spanning segment. Residues 87 to 105 (LPLVGTDLGGSVLSSSQQE) lie on the Extracellular side of the membrane. The chain crosses the membrane as a helical span at residues 106-126 (IITAGTTIGAIFGSAILGGWG). At 127–132 (DRLGRK) the chain is on the cytoplasmic side. Residues 133–153 (VAILIADVFFTVGAVLIAASY) form a helical membrane-spanning segment. The Extracellular portion of the chain corresponds to 154-162 (SVPQMIVGR). A helical membrane pass occupies residues 163–183 (IVLGVGVGGAAAIAPLFITET). Topologically, residues 184–192 (APTAVRGRC) are cytoplasmic. A helical membrane pass occupies residues 193 to 213 (IGVNAFFIPFGQVISEAIGAG). The Extracellular segment spans residues 214–222 (VQDMKNGWR). Residues 223–243 (LLFALGAVPSLFQLILFHYLP) traverse the membrane as a helical segment. Over 244–325 (ESPRILILRG…TVSLIQMAGQ (82 aa)) the chain is Cytoplasmic. A helical membrane pass occupies residues 326 to 346 (LSGFNTLLYYAGTLFSLLGLT). At 347 to 349 (NPA) the chain is on the extracellular side. The helical transmembrane segment at 350 to 370 (LGGLIPAGTNAFFVLVGMTLV) threads the bilayer. Topologically, residues 371–376 (DKVGRR) are cytoplasmic. A helical membrane pass occupies residues 377-397 (GLLMFGVPIMLAGLVWNIVAF). Residues 398-417 (HYLCIPTGGLLDTSYKYDTK) lie on the Extracellular side of the membrane. The chain crosses the membrane as a helical span at residues 418 to 438 (LVGIVIGGIVFFTTGFGLTYS). At 439-454 (HLAWYQSEFLALEVRS) the chain is on the cytoplasmic side. Residues 455–475 (VGSGIATTANWVANLVVSVSY) traverse the membrane as a helical segment. Residues 476 to 485 (LTELETLTPS) lie on the Extracellular side of the membrane. A helical transmembrane segment spans residues 486–506 (GTYGLYLGFSVVFFIFAVFCY). The Cytoplasmic segment spans residues 507–590 (PETKQLSIDE…NGAKRFPISR (84 aa)).

It belongs to the major facilitator superfamily. Sugar transporter (TC 2.A.1.1) family.

It localises to the cell membrane. It carries out the reaction myo-inositol(out) + H(+)(out) = myo-inositol(in) + H(+)(in). Major transporter for myo-inositol. Plays a role in the traversal of the host blood-brain barrier. This Cryptococcus neoformans var. grubii serotype A (strain H99 / ATCC 208821 / CBS 10515 / FGSC 9487) (Filobasidiella neoformans var. grubii) protein is Myo-inositol transporter 3C.